Here is a 605-residue protein sequence, read N- to C-terminus: Replication and transcription activator (605 aa).

Disordered stretches follow at residues 307–381 (SLPS…EPEQ) and 447–509 (RIRP…EDPD). The segment covering 321 to 338 (SADCGDSSSSSSDSGNSD) has biased composition (low complexity). The span at 341-353 (QSEREEARAEAPR) shows a compositional bias: basic and acidic residues. Positions 355–364 (RAPKSRRTSR) are enriched in basic residues.

Belongs to the herpesviridae Rta family. Interacts with human ATF7IP protein, leading to promote and regulate host genes in virus-infected cells. Interacts with RNA polymerase III complex; this interaction downregulates small RNA transcription and 5'-pppRNA production.

Its subcellular location is the host nucleus. It is found in the virion tegument. In terms of biological role, immediate-early transcription factor that controls the initiation of viral lytic gene expression and lytic reactivation from latency. Triggers lytic replication, and initiates a cellular senescence program in epithelial cells. Up-regulates human DCR3/TNFRSF6B by directly binding to its receptor. Globally induces a proteasome-dependent loss of SUMOylated proteins in the host cell and the loss of promeylocytic leukemia nuclear bodies. Improves the stability of the triplex capsid protein TRX1 by reducing the ubiquitination level of the latter. Mediates evasion of inflammasome activation and antiviral responses (T- and NK cell activation) during EBV early lytic infection. The sequence is that of Replication and transcription activator from Epstein-Barr virus (strain AG876) (HHV-4).